The following is a 709-amino-acid chain: Caprin-1 (709 aa).

Composition is skewed to low complexity over residues 1–15 (MPSATSHSGSGSKSS) and 22–43 (GSSGSEAAAGAGAAAPASQHPA). The disordered stretch occupies residues 1–50 (MPSATSHSGSGSKSSGPPPPSGSSGSEAAAGAGAAAPASQHPATGTGAVQ). Pro2 bears the N-acetylproline mark. Position 2 is an N-acetylalanine (Pro2). Ser10 carries the phosphoserine modification. Residues 60–94 (VIDKKLRNLEKKKGKLDDYQERMNKGERLNQDQLD) adopt a coiled-coil conformation. Phosphoserine is present on Ser115. The stretch at 125 to 153 (KTIKKTARREQLMREEAEQKRLKTVLELQ) forms a coiled coil. Arg165 bears the Omega-N-methylarginine mark. A disordered region spans residues 260–291 (EEAASAPAVEDQVPEAEPEPAEEYTEQSEVES). Residues 271–291 (QVPEAEPEPAEEYTEQSEVES) are compositionally biased toward acidic residues. Ser335 and Ser343 each carry phosphoserine. The G3BP1-binding stretch occupies residues 360-381 (QDLMAQMQGPYNFIQDSMLDFE). 3 disordered regions span residues 417–446 (LAQPNQVPVQPEATQVPLVSSTSEGYTASQ), 475–499 (TDQTTASSSLPAASQPQVFQAGTSK), and 524–709 (APVP…QQVN). Positions 433–446 (PLVSSTSEGYTASQ) are enriched in polar residues. 2 stretches are compositionally biased toward low complexity: residues 477 to 491 (QTTASSSLPAASQPQ) and 537 to 570 (QQNQYQASYNQSFSSQPHQVEQTELQQEQLQTVV). The span at 577–605 (PDQSHQVTGNHQQPPQQNTGFPRSNQPYY) shows a compositional bias: polar residues. The residue at position 625 (Tyr625) is a Phosphotyrosine; by EPHA4. An omega-N-methylarginine mark is found at Arg626 and Arg633. Tyr636 and Tyr639 each carry phosphotyrosine; by EPHA4. Arg640 carries the post-translational modification Omega-N-methylarginine. Polar residues predominate over residues 642–657 (SFSNTPNSGYTQSQFS). Residues Ser644 and Ser649 are each glycosylated (O-linked (GlcNAc) serine). Phosphotyrosine; by EPHA4 is present on residues Tyr651, Tyr662, Tyr665, and Tyr670. Low complexity-rich tracts occupy residues 676–686 (RGSGQSGPRGA) and 697–709 (NRGMPQMNTQQVN). Arg698 carries the post-translational modification Asymmetric dimethylarginine; alternate. Residue Arg698 is modified to Omega-N-methylarginine; alternate.

It belongs to the caprin family. In terms of assembly, may form homomultimers. Interacts with G3BP1; interaction is direct and promotes stress granule formation. Interacts with G3BP2; interaction is direct and promotes stress granule formation. Interacts with PQBP1. Interacts with DDX3X. Interacts (when phosphorylated by EPHA4) with FMR1; interaction with FMR1 promotes formation of a membraneless compartment. (Microbial infection) Interacts with Zika virus capsid protein C; this interaction is probably linked to the inhibition of stress granules formation by the virus. As to quaternary structure, (Microbial infection) Interacts with rotavirus A non-structural protein 5; this interaction probably plays a role in the sequestration of CAPRIN1 in viral factories. In terms of assembly, (Microbial infection) Interacts with Japanese encephalitis virus capsid protein C; this interaction is involved in the suppression of the integrated stress response by the virus. Tyrosine phosphorylation by EPHA4 promotes interaction with FMR1 and liquid-liquid phase separation (LLPS) for the formation of a membraneless compartment that concentrates mRNAs with associated regulatory factors. Post-translationally, O-glycosylated (O-GlcNAcylated), in a cell cycle-dependent manner. O-glycosylation by OGT inhibit ability to undergo liquid-liquid phase separation (LLPS). Ubiquitous.

It is found in the cytoplasm. It localises to the cytoplasmic ribonucleoprotein granule. The protein resides in the cytosol. The protein localises to the cell projection. Its subcellular location is the dendrite. It is found in the lamellipodium. Its activity is regulated as follows. Ability to mediate liquid-liquid phase separation is regulated by ATP: moderate concentrations of ATP enhance phase separation, whereas high concentrations of ATP lead to inhibition of phase separation. In terms of biological role, mRNA-binding protein that acts as a regulator of mRNAs transport, translation and/or stability, and which is involved in neurogenesis, synaptic plasticity in neurons and cell proliferation and migration in multiple cell types. Plays an essential role in cytoplasmic stress granule formation. Acts as an mRNA regulator by mediating formation of some phase-separated membraneless compartment: undergoes liquid-liquid phase separation upon binding to target mRNAs, leading to assemble mRNAs into cytoplasmic ribonucleoprotein granules that concentrate mRNAs with associated regulatory factors. Undergoes liquid-liquid phase separation following phosphorylation and interaction with FMR1, promoting formation of cytoplasmic ribonucleoprotein granules that concentrate mRNAs with factors that inhibit translation and mediate deadenylation of target mRNAs. In these cytoplasmic ribonucleoprotein granules, CAPRIN1 mediates recruitment of CNOT7 deadenylase, leading to mRNA deadenylation and degradation. Binds directly and selectively to MYC and CCND2 mRNAs. In neuronal cells, directly binds to several mRNAs associated with RNA granules, including BDNF, CAMK2A, CREB1, MAP2, NTRK2 mRNAs, as well as to GRIN1 and KPNB1 mRNAs, but not to rRNAs. In Homo sapiens (Human), this protein is Caprin-1.